A 451-amino-acid polypeptide reads, in one-letter code: Cobalamin reductase PduS (451 aa).

2 consecutive 4Fe-4S ferredoxin-type domains span residues 255–284 (TVLS…HELS) and 300–330 (PQLL…MRIN). Cys264, Cys267, Cys270, Cys274, Cys309, Cys312, Cys315, and Cys320 together coordinate [4Fe-4S] cluster.

It belongs to the PduS cobalamin reductase family. As to quaternary structure, monomer, forms a complex with PduO. Interacts with PduT, probably via the N-terminus of PduS. It depends on [4Fe-4S] cluster as a cofactor. FMN is required as a cofactor.

Its subcellular location is the bacterial microcompartment. The protein operates within polyol metabolism; 1,2-propanediol degradation. Its function is as follows. A bifunctional cobalamin reductase that converts cob(III)alamin to cob(II)alamin and then to cob(I)alamin in the bacterial microcompartment (BMC) dedicated to 1,2-propanediol (1,2-PD) degradation. PduS and PduO allow regeneration of the adenosylcobalamin cofactor within the BMC. Cobalamin reduction probably occurs spontaneously in the presence of free reduced flavin nucleotides, this protein may be involved in electron transfer for this reduction. In terms of biological role, expression of a cosmid containing the full 21-gene pdu operon in E.coli allows E.coli to grow on 1,2-propanediol (1,2-PD) with the appearance of BMCs in its cytoplasm. The 1,2-PD-specific bacterial microcompartment (BMC) concentrates low levels of 1,2-PD catabolic enzymes, concentrates volatile reaction intermediates thus enhancing pathway flux and keeps the level of toxic, mutagenic propionaldehyde low. The protein is Cobalamin reductase PduS of Citrobacter freundii.